The sequence spans 320 residues: ATP-dependent 6-phosphofructokinase (320 aa).

Gly-11 is an ATP binding site. An ADP-binding site is contributed by 21-25; sequence RAIAR. Residues 72 to 73 and 102 to 105 each bind ATP; these read RF and GDGS. A Mg(2+)-binding site is contributed by Asp-103. Substrate contacts are provided by residues 125-127, Arg-162, and 169-171; these read TID and MGR. Asp-127 functions as the Proton acceptor in the catalytic mechanism. ADP is bound by residues 185–187 and 213–215; these read GAD and KDH. Substrate-binding positions include Glu-222, Arg-243, and 249 to 252; that span reads HIQR.

The protein belongs to the phosphofructokinase type A (PFKA) family. ATP-dependent PFK group I subfamily. Prokaryotic clade 'B1' sub-subfamily. As to quaternary structure, homotetramer. Mg(2+) is required as a cofactor.

Its subcellular location is the cytoplasm. It catalyses the reaction beta-D-fructose 6-phosphate + ATP = beta-D-fructose 1,6-bisphosphate + ADP + H(+). Its pathway is carbohydrate degradation; glycolysis; D-glyceraldehyde 3-phosphate and glycerone phosphate from D-glucose: step 3/4. Its activity is regulated as follows. Allosterically activated by ADP and other diphosphonucleosides, and allosterically inhibited by phosphoenolpyruvate. In terms of biological role, catalyzes the phosphorylation of D-fructose 6-phosphate to fructose 1,6-bisphosphate by ATP, the first committing step of glycolysis. In Ligilactobacillus salivarius (strain UCC118) (Lactobacillus salivarius), this protein is ATP-dependent 6-phosphofructokinase.